A 152-amino-acid polypeptide reads, in one-letter code: Transcriptional repressor NrdR (152 aa).

A zinc finger spans residues 3 to 34 (CPFCSTEETKVIDSRLVSEGYQVRRRRECTNC). One can recognise an ATP-cone domain in the interval 49–139 (PKIVKTDGYR…VYLSFENINE (91 aa)).

Belongs to the NrdR family. The cofactor is Zn(2+).

Negatively regulates transcription of bacterial ribonucleotide reductase nrd genes and operons by binding to NrdR-boxes. The polypeptide is Transcriptional repressor NrdR (Actinobacillus succinogenes (strain ATCC 55618 / DSM 22257 / CCUG 43843 / 130Z)).